Here is a 396-residue protein sequence, read N- to C-terminus: MQPETQESLSTRFAAQQEIQLTLIEKESYDLKDHLAYWKAVRLENVIAYYARKEHITKLGLQPLPTLAVTEYKAKEAINIQLLIQSLLKSEFALERWTLAETSAETINSSPRNCFKKVPFIVNVWFDNDERNSFPYTCWDFIYYQDDQNKWHKTEGLVDHNGCYYVDLNGDFVYFTLFQPDAVKYGKTGLWTVRFKNKTISASVTSSSRNTNPSSESRVGLSTSSSSESPRRRPSISENSNTESPTSSTSRLRERRRREPRESGTTDTTPRRRGTKRKLGSDSAPTPSEVGSRSTTLARHGYSRLGRLQEEARDPPLVLFTGQQNNLKCWRNRCTTKYASLFLCFSSVWKWLGPNSDGGAAKVLVAFKSDAQRQVFLNTVHIPKGTTITLGRLDSL.

The tract at residues 1 to 207 is transactivation domain; it reads MQPETQESLS…KTISASVTSS (207 aa). The interval 202–298 is disordered; sequence ASVTSSSRNT…EVGSRSTTLA (97 aa). Low complexity-rich tracts occupy residues 203 to 228 and 236 to 250; these read SVTS…SSSE and ISEN…SSTS. Residues 283–297 show a composition bias toward polar residues; it reads SAPTPSEVGSRSTTL. The DNA-binding domain stretch occupies residues 314-396; the sequence is DPPLVLFTGQ…TITLGRLDSL (83 aa).

It belongs to the papillomaviridae E2 protein family. In terms of assembly, binds DNA as homodimer. Interacts with protein E1; this interaction greatly increases E1 DNA-binding activity. Interacts with protein L1; this interaction enhances E2-dependent replication and transcription activation. Interacts with protein L2; this interaction inhibits E2 transcriptional activity but not DNA replication function E2. Interacts with protein E7; this interaction inhibits E7 oncogenic activity. Interacts with host TAF1; this interaction modulates E2-dependent transcriptional regulation. Interacts with host BRD4; this interaction mediates E2 transcriptional activation function. Additionally, the interaction with host BRD4 on mitotic chromosomes mediates tethering of the viral genome. Interacts with host TOPBP1; this interaction is required for optimal viral DNA replication. Post-translationally, phosphorylated.

The protein resides in the host nucleus. Plays a role in the initiation of viral DNA replication. A dimer of E2 interacts with a dimer of E1 in order to improve specificity of E1 DNA binding activity. Once the complex recognizes and binds DNA at specific sites, the E2 dimer is removed from DNA. E2 also regulates viral transcription through binding to the E2RE response element (5'-ACCNNNNNNGGT-3') present in multiple copies in the regulatory regions of the viral genome. Activates or represses transcription depending on E2RE's position with regards to proximal promoter elements including the TATA-box. Repression occurs by sterically hindering the assembly of the transcription initiation complex. This Human papillomavirus type 48 protein is Regulatory protein E2.